Consider the following 316-residue polypeptide: KRR1 small subunit processome component (316 aa).

In terms of domain architecture, KH spans 122–192; that stretch reads ACDVIKIGNF…VRRVVEDCMK (71 aa). The span at 279–304 shows a compositional bias: basic and acidic residues; that stretch reads KKLNEQKEKQMEREIERQEERAKDFI. Positions 279–316 are disordered; the sequence is KKLNEQKEKQMEREIERQEERAKDFIAPEEEAYKPNQN.

The protein belongs to the KRR1 family. As to quaternary structure, component of the ribosomal small subunit (SSU) processome composed of at least 40 protein subunits and snoRNA U3. Interacts with snoRNA U3. Interacts with MPP10, KRI1 and with ribosomal proteins RPS1A, RPS4A, RPS4B, RPS8A, RPS8B, RPS11A, RPS11B, RPS13, RPS24, RPS25, RPL4A, RPL7B, RPL8, RPL23, RPL25 and RPL28.

It localises to the nucleus. Its subcellular location is the nucleolus. Required for 40S ribosome biogenesis. Involved in nucleolar processing of pre-18S ribosomal RNA and ribosome assembly. Essential for vegetative growth. In Saccharomyces cerevisiae (strain RM11-1a) (Baker's yeast), this protein is KRR1 small subunit processome component.